A 173-amino-acid polypeptide reads, in one-letter code: Disulfide bond formation protein B (173 aa).

Residues 1 to 16 (MRILSSLKTFSQSRLS) lie on the Cytoplasmic side of the membrane. A helical transmembrane segment spans residues 17 to 33 (WLLLLAFVVFFTLCAMY). The Periplasmic segment spans residues 34–51 (FQHVMLLAPCVMCIYERI). Cysteine 43 and cysteine 46 are disulfide-bonded. Residues 52 to 67 (AMLGIGVAALIGAIAP) form a helical membrane-spanning segment. The Cytoplasmic segment spans residues 68-74 (QNPVVRW). Residues 75–92 (LGFAAWGASSYKGLMLAI) form a helical membrane-spanning segment. Topologically, residues 93 to 147 (EHVNYQFNPSPFATCDLFVTFPAWAPLNQWAPNLFEAYGDCSKVVWQFLTLSMPQ) are periplasmic. Residues cysteine 107 and cysteine 133 are joined by a disulfide bond. Residues 148 to 166 (WLVVIFAANLLALAIFVVA) form a helical membrane-spanning segment. Over 167 to 173 (QLAKTSR) the chain is Cytoplasmic.

It belongs to the DsbB family.

Its subcellular location is the cell inner membrane. In terms of biological role, required for disulfide bond formation in some periplasmic proteins. Acts by oxidizing the DsbA protein. The chain is Disulfide bond formation protein B from Vibrio cholerae serotype O1 (strain ATCC 39315 / El Tor Inaba N16961).